Reading from the N-terminus, the 224-residue chain is Phosphoglycolate phosphatase (224 aa).

D11 (nucleophile) is an active-site residue. Mg(2+)-binding residues include D11, D13, and D177.

Belongs to the HAD-like hydrolase superfamily. CbbY/CbbZ/Gph/YieH family. Mg(2+) serves as cofactor.

It carries out the reaction 2-phosphoglycolate + H2O = glycolate + phosphate. It participates in organic acid metabolism; glycolate biosynthesis; glycolate from 2-phosphoglycolate: step 1/1. Its function is as follows. Specifically catalyzes the dephosphorylation of 2-phosphoglycolate. Is involved in the dissimilation of the intracellular 2-phosphoglycolate formed during the DNA repair of 3'-phosphoglycolate ends, a major class of DNA lesions induced by oxidative stress. The chain is Phosphoglycolate phosphatase from Mannheimia succiniciproducens (strain KCTC 0769BP / MBEL55E).